A 145-amino-acid polypeptide reads, in one-letter code: D-aminoacyl-tRNA deacylase (145 aa).

A Gly-cisPro motif, important for rejection of L-amino acids motif is present at residues 137 to 138 (GP).

This sequence belongs to the DTD family. In terms of assembly, homodimer.

The protein resides in the cytoplasm. It catalyses the reaction glycyl-tRNA(Ala) + H2O = tRNA(Ala) + glycine + H(+). The enzyme catalyses a D-aminoacyl-tRNA + H2O = a tRNA + a D-alpha-amino acid + H(+). Functionally, an aminoacyl-tRNA editing enzyme that deacylates mischarged D-aminoacyl-tRNAs. Also deacylates mischarged glycyl-tRNA(Ala), protecting cells against glycine mischarging by AlaRS. Acts via tRNA-based rather than protein-based catalysis; rejects L-amino acids rather than detecting D-amino acids in the active site. By recycling D-aminoacyl-tRNA to D-amino acids and free tRNA molecules, this enzyme counteracts the toxicity associated with the formation of D-aminoacyl-tRNA entities in vivo and helps enforce protein L-homochirality. The sequence is that of D-aminoacyl-tRNA deacylase from Shewanella loihica (strain ATCC BAA-1088 / PV-4).